The primary structure comprises 147 residues: Ponticulin-like protein C3 (147 aa).

Residues 1 to 20 (MKFTKSLLLLIVAVFASSNA) form the signal peptide. A lipid anchor (GPI-like-anchor amidated asparagine) is attached at N118. Residue N118 is glycosylated (N-linked (GlcNAc...) asparagine). Positions 119–147 (SSESDSSDSTRIGASFALFALALLSMLAL) are cleaved as a propeptide — removed in mature form.

This sequence belongs to the ponticulin family. Post-translationally, the GPI-like-anchor contains a phosphoceramide group, rather than a phosphatidyl group.

Its subcellular location is the cell membrane. This chain is Ponticulin-like protein C3 (ponC3), found in Dictyostelium discoideum (Social amoeba).